We begin with the raw amino-acid sequence, 247 residues long: Carboxy-S-adenosyl-L-methionine synthase (247 aa).

S-adenosyl-L-methionine-binding positions include Y39, 64-66 (GCS), 89-90 (DN), 117-118 (DI), N132, and R199.

The protein belongs to the class I-like SAM-binding methyltransferase superfamily. Cx-SAM synthase family. As to quaternary structure, homodimer.

The enzyme catalyses prephenate + S-adenosyl-L-methionine = carboxy-S-adenosyl-L-methionine + 3-phenylpyruvate + H2O. Its function is as follows. Catalyzes the conversion of S-adenosyl-L-methionine (SAM) to carboxy-S-adenosyl-L-methionine (Cx-SAM). This chain is Carboxy-S-adenosyl-L-methionine synthase, found in Escherichia coli O139:H28 (strain E24377A / ETEC).